The sequence spans 437 residues: MFILTMGLNHHTAPIDIREKLVFKETEEEMALITLLQEKSILENVIISTCNRTEIVAVVDQIHTGRYYLKRFMANWFQMDMEKIEPYLFFHEEKEAVNHLYKVTAGLDSLVLGETQILGQVKHAFEIAKQTGTTGTLLNKLFREVVTFAKKVHHQTKINENAVSVSYAAVEVAKKLYGSLENKKIVLVGAGEMSELALQNLAGSGIADITIINRTKANAEILADQFQAKVGTYEEMNNYLSIADIVLVSTSADEPIIKQKDMQILMSQKSTSMLVIDIGLPRNVEHDCSYIPNFHLYDIDDLAGVVSANSLERQKIVLALENTIETEVQNFFEWEKQLGVVPVIRALREKALEMQEITMTSLENKLPGLTEREYIQIGKHMKSIINQMLKQPISELKEMSVENDAPTSIEHFKRIFGLTELDITLSEKTQEQAETRS.

Residues Thr-49–Arg-52, Ser-109, Glu-114–Gln-116, and Gln-120 each bind substrate. The active-site Nucleophile is the Cys-50. Gly-189 to Ser-194 serves as a coordination point for NADP(+).

This sequence belongs to the glutamyl-tRNA reductase family. In terms of assembly, homodimer.

It catalyses the reaction (S)-4-amino-5-oxopentanoate + tRNA(Glu) + NADP(+) = L-glutamyl-tRNA(Glu) + NADPH + H(+). Its pathway is porphyrin-containing compound metabolism; protoporphyrin-IX biosynthesis; 5-aminolevulinate from L-glutamyl-tRNA(Glu): step 1/2. Catalyzes the NADPH-dependent reduction of glutamyl-tRNA(Glu) to glutamate 1-semialdehyde (GSA). The chain is Glutamyl-tRNA reductase from Listeria welshimeri serovar 6b (strain ATCC 35897 / DSM 20650 / CCUG 15529 / CIP 8149 / NCTC 11857 / SLCC 5334 / V8).